The following is a 506-amino-acid chain: MLEKLIILDFGSQTTQLIARRIRELNTYCEVYPYNKLPEDLSGVRGIILSGSPYSVYDSKAFRIELSELRGKLPLLGICYGAQSLVHQAGGKVEPCDSREYGRTHLTLRQPDDALLTGLQSGTTVWMSHGDTITSLPEGFEVIAGTEDVPNAAFRIRGEKTWGVQFHPEIYHSEEGTKLLGNFLDICGMKRDWTPASFIEATVQELRERLGDDKVILALSGGVDSSVVAVLLNKAIGRNLTCIFVDHGLLRKGEFERVLQDYEHLGLNVIGVNAKEKFFAALSGVTDPEQKRKIIGRGFIEVFDEEARKLKDIKWLGQGTIYPDVIESLSITGMVIKSHHNVGGLPERMNLRLVEPLRMLFKDEVRRVGLELGMMPHLIHRHPFPGPGLGIRILGEITEEKATILQNADDIYMSLMREWGLYDQVWQAGAILLPVRSVGVMGDERTYEYTVALRAVTSMDAMSADWVHLPYDFLAKVSNEIINKVRGVNRVVYDISSKPPSTIEWE.

The 189-residue stretch at 4–192 (KLIILDFGSQ…FLDICGMKRD (189 aa)) folds into the Glutamine amidotransferase type-1 domain. The Nucleophile role is filled by cysteine 79. Catalysis depends on residues histidine 167 and glutamate 169. One can recognise a GMPS ATP-PPase domain in the interval 193 to 381 (WTPASFIEAT…LGMMPHLIHR (189 aa)). An ATP-binding site is contributed by 220 to 226 (SGGVDSS).

As to quaternary structure, homodimer.

It carries out the reaction XMP + L-glutamine + ATP + H2O = GMP + L-glutamate + AMP + diphosphate + 2 H(+). The protein operates within purine metabolism; GMP biosynthesis; GMP from XMP (L-Gln route): step 1/1. Its function is as follows. Catalyzes the synthesis of GMP from XMP. This is GMP synthase [glutamine-hydrolyzing] from Porphyromonas gingivalis (strain ATCC BAA-308 / W83).